The primary structure comprises 343 residues: Major outer membrane protein (343 aa).

The signal sequence occupies residues 1–20; sequence MKKTIVALAVAAVAATSANA.

Disulfide bond interactions within and between MOMP molecules and other components form high molecular-weight oligomers.

The protein resides in the cell outer membrane. Its function is as follows. Structural rigidity of the outer membrane of elementary bodies and porin forming, permitting diffusion of solutes through the intracellular reticulate body membrane. The sequence is that of Major outer membrane protein (ompH) from Pasteurella multocida.